Reading from the N-terminus, the 542-residue chain is CTP synthase (542 aa).

The segment at 1–265 (MARYIFITGG…DQEVLAAFGI (265 aa)) is amidoligase domain. Residue Ser-13 coordinates CTP. Ser-13 is a UTP binding site. 14 to 19 (SLGKGL) provides a ligand contact to ATP. Tyr-54 is an L-glutamine binding site. Asp-71 contributes to the ATP binding site. The Mg(2+) site is built by Asp-71 and Glu-139. Residues 146–148 (DIE), 186–191 (KTKPTQ), and Lys-222 contribute to the CTP site. Residues 186–191 (KTKPTQ) and Lys-222 contribute to the UTP site. 238–240 (RDV) serves as a coordination point for ATP. A Glutamine amidotransferase type-1 domain is found at 291 to 541 (TIAIVGKYTG…IAAALEQSRL (251 aa)). An L-glutamine-binding site is contributed by Gly-353. The active-site Nucleophile; for glutamine hydrolysis is the Cys-380. L-glutamine contacts are provided by residues 381 to 384 (FGMQ), Glu-404, and Arg-469. Active-site residues include His-514 and Glu-516.

The protein belongs to the CTP synthase family. In terms of assembly, homotetramer.

The enzyme catalyses UTP + L-glutamine + ATP + H2O = CTP + L-glutamate + ADP + phosphate + 2 H(+). It carries out the reaction L-glutamine + H2O = L-glutamate + NH4(+). It catalyses the reaction UTP + NH4(+) + ATP = CTP + ADP + phosphate + 2 H(+). It participates in pyrimidine metabolism; CTP biosynthesis via de novo pathway; CTP from UDP: step 2/2. With respect to regulation, allosterically activated by GTP, when glutamine is the substrate; GTP has no effect on the reaction when ammonia is the substrate. The allosteric effector GTP functions by stabilizing the protein conformation that binds the tetrahedral intermediate(s) formed during glutamine hydrolysis. Inhibited by the product CTP, via allosteric rather than competitive inhibition. Catalyzes the ATP-dependent amination of UTP to CTP with either L-glutamine or ammonia as the source of nitrogen. Regulates intracellular CTP levels through interactions with the four ribonucleotide triphosphates. This chain is CTP synthase, found in Methylocella silvestris (strain DSM 15510 / CIP 108128 / LMG 27833 / NCIMB 13906 / BL2).